We begin with the raw amino-acid sequence, 479 residues long: 5-hydroxytryptamine receptor 2B (479 aa).

The Extracellular portion of the chain corresponds to 1–55 (MASSYKMSEQSTTSEHILQKTCDHLILTNRSGLETDSVAEEMKQTVEGQGHTVHW). N-linked (GlcNAc...) asparagine glycosylation occurs at N29. A helical transmembrane segment spans residues 56-78 (AALLILAVIIPTIGGNILVILAV). At 79–89 (ALEKRLQYATN) the chain is on the cytoplasmic side. A helical membrane pass occupies residues 90–112 (YFLMSLAIADLLVGLFVMPIALL). At 113–128 (TIMFEAIWPLPLALCP) the chain is on the extracellular side. C127 and C206 are oxidised to a cystine. Residues 129-150 (AWLFLDVLFSTASIMHLCAISL) traverse the membrane as a helical segment. Residues D134 and T139 each contribute to the ergotamine site. Positions 151–153 (DRY) match the DRY motif; important for ligand-induced conformation changes motif. The Cytoplasmic portion of the chain corresponds to 151 to 170 (DRYIAIKKPIQANQCNSRAT). A helical membrane pass occupies residues 171–191 (AFIKITVVWLISIGIAIPVPI). Topologically, residues 192–215 (KGIETDVINPHNVTCELTKDRFGS) are extracellular. L208 is a binding site for ergotamine. A [DE]RFG motif; may stabilize a conformation that preferentially activates signaling via beta-arrestin family members motif is present at residues 211-214 (DRFG). A helical membrane pass occupies residues 216-238 (FMVFGSLAAFFAPLTIMVVTYFL). The Cytoplasmic segment spans residues 239-323 (TIHTLQKKAY…TISNEQRASK (85 aa)). Residues 324–344 (ALGVVFFLFLLMWCPFFITNL) traverse the membrane as a helical segment. Topologically, residues 345 to 359 (TLALCDSCNQTTLKT) are extracellular. A disulfide bridge links C349 with C352. The chain crosses the membrane as a helical span at residues 360-381 (LLEIFVWIGYVSSGVNPLIYTL). An NPxxY motif; important for ligand-induced conformation changes and signaling motif is present at residues 375 to 379 (NPLIY). Topologically, residues 382–479 (FNKTFREAFG…DKAEEQVSYI (98 aa)) are cytoplasmic. C396 is lipidated: S-palmitoyl cysteine. The PDZ-binding signature appears at 477 to 479 (SYI).

This sequence belongs to the G-protein coupled receptor 1 family. In terms of assembly, interacts (via C-terminus) with MPDZ. In terms of tissue distribution, ubiquitous. Detected in intestine, heart, skeletal muscle, testis, urinary bladder, stomach, liver, lung, brain and kidney. Detected in osteoblasts. Detected in the raphe nucleus in the brain, in dorsal root ganglion neurons, the brain stem, cerebellum and spinal cord. Detected in interstitial cells of Cajal in the small intestine.

It is found in the cell membrane. The protein localises to the synapse. Its subcellular location is the synaptosome. Its function is as follows. G-protein coupled receptor for 5-hydroxytryptamine (serotonin). Also functions as a receptor for various ergot alkaloid derivatives and psychoactive substances. Ligand binding causes a conformation change that triggers signaling via guanine nucleotide-binding proteins (G proteins) and modulates the activity of downstream effectors. HTR2B is coupled to G(q)/G(11) G alpha proteins and activates phospholipase C-beta, releasing diacylglycerol (DAG) and inositol 1,4,5-trisphosphate (IP3) second messengers that modulate the activity of phosphatidylinositol 3-kinase and promote the release of Ca(2+) ions from intracellular stores, respectively. Beta-arrestin family members inhibit signaling via G proteins and mediate activation of alternative signaling pathways. Plays a role in the regulation of dopamine and 5-hydroxytryptamine release, 5-hydroxytryptamine uptake and in the regulation of extracellular dopamine and 5-hydroxytryptamine levels, and thereby affects neural activity. May play a role in the perception of pain. Plays a role in the regulation of behavior, including impulsive behavior. Required for normal proliferation of embryonic cardiac myocytes and normal heart development. Protects cardiomyocytes against apoptosis. Plays a role in the adaptation of pulmonary arteries to chronic hypoxia. Plays a role in vasoconstriction. Required for normal osteoblast function and proliferation, and for maintaining normal bone density. Required for normal proliferation of the interstitial cells of Cajal in the intestine. This Mus musculus (Mouse) protein is 5-hydroxytryptamine receptor 2B (Htr2b).